The chain runs to 280 residues: Bicarbonate transport system permease protein CmpB (280 aa).

7 consecutive transmembrane segments (helical) span residues 32–52, 99–119, 126–146, 153–173, 198–218, 219–239, and 251–271; these read PIFG…AGLI, YSLA…QPLL, IFQF…LVAL, AIFV…TEGV, ILIP…IGLA, WLAI…GFFI, and IILA…GIAY. The ABC transmembrane type-1 domain maps to 88 to 266; that stretch reads TLASLGRVAQ…YIGAVGLLLD (179 aa).

It belongs to the binding-protein-dependent transport system permease family. As to quaternary structure, the complex is composed of two ATP-binding proteins (CmpC and CmpD), a transmembrane protein (CmpB) and a solute-binding protein (CmpA).

It is found in the cell inner membrane. In terms of biological role, part of the ABC transporter complex CmpABCD involved in bicarbonate transport. Probably responsible for the translocation of the substrate across the membrane. The protein is Bicarbonate transport system permease protein CmpB (cmpB) of Synechocystis sp. (strain ATCC 27184 / PCC 6803 / Kazusa).